A 299-amino-acid chain; its full sequence is MKKLGTDLLKRGFAKMVKHGVVMDVTNVEQAQIAEDAGAAAVMALERVPADIRVQGGVARMSDPEMILEIKDAVSIPVMAKARIGHFVEAQVLESIGVDMVDESEVLTPADEVNHIDKRAFTAPFVCGARNLGEALRRIDEGAAMIRTKGEAGTGNVVEAVKHMRAVNEGIARVVGYKEMGLEAELIQMARNELKVPMELISEVAELKRLPVVNFAAGGIATPADAALMMQMGCDGVFVGSGIFKSGNPATRAKAIVEATYNFDKPDVIGEVSKNLGEAMVGINIDEIPEEKLLAKRGI.

D24 is a binding site for D-ribose 5-phosphate. The Schiff-base intermediate with D-ribose 5-phosphate role is filled by K81. G153 provides a ligand contact to D-ribose 5-phosphate. R165 serves as a coordination point for D-glyceraldehyde 3-phosphate. D-ribose 5-phosphate contacts are provided by residues G219 and 240-241 (GS).

Belongs to the PdxS/SNZ family. In the presence of PdxT, forms a dodecamer of heterodimers.

It catalyses the reaction aldehydo-D-ribose 5-phosphate + D-glyceraldehyde 3-phosphate + L-glutamine = pyridoxal 5'-phosphate + L-glutamate + phosphate + 3 H2O + H(+). Its pathway is cofactor biosynthesis; pyridoxal 5'-phosphate biosynthesis. In terms of biological role, catalyzes the formation of pyridoxal 5'-phosphate from ribose 5-phosphate (RBP), glyceraldehyde 3-phosphate (G3P) and ammonia. The ammonia is provided by the PdxT subunit. Can also use ribulose 5-phosphate and dihydroxyacetone phosphate as substrates, resulting from enzyme-catalyzed isomerization of RBP and G3P, respectively. The polypeptide is Pyridoxal 5'-phosphate synthase subunit PdxS (Methanococcus maripaludis (strain C7 / ATCC BAA-1331)).